The sequence spans 89 residues: uncharacterized protein (89 aa).

This sequence to Synechocystis PCC 6803 slr1025.

This is an uncharacterized protein from Ureaplasma parvum serovar 3 (strain ATCC 700970).